Reading from the N-terminus, the 321-residue chain is tRNA-dihydrouridine synthase B (321 aa).

FMN contacts are provided by residues 16–18 and Q70; that span reads PMA. The Proton donor role is filled by C100. FMN is bound by residues K139, 200–202, and 224–225; these read NGD and GR.

It belongs to the Dus family. DusB subfamily. It depends on FMN as a cofactor.

The enzyme catalyses a 5,6-dihydrouridine in tRNA + NAD(+) = a uridine in tRNA + NADH + H(+). It catalyses the reaction a 5,6-dihydrouridine in tRNA + NADP(+) = a uridine in tRNA + NADPH + H(+). Catalyzes the synthesis of 5,6-dihydrouridine (D), a modified base found in the D-loop of most tRNAs, via the reduction of the C5-C6 double bond in target uridines. This is tRNA-dihydrouridine synthase B from Pectobacterium carotovorum (Erwinia carotovora).